Here is a 251-residue protein sequence, read N- to C-terminus: GTP cyclohydrolase 1 type 2 homolog (251 aa).

A divalent metal cation-binding residues include His-64, His-65, Asp-102, His-219, and Glu-223.

It belongs to the GTP cyclohydrolase I type 2/NIF3 family. In terms of assembly, homohexamer.

In Chlamydia trachomatis serovar D (strain ATCC VR-885 / DSM 19411 / UW-3/Cx), this protein is GTP cyclohydrolase 1 type 2 homolog.